A 157-amino-acid chain; its full sequence is Protein-export protein SecB (157 aa).

Belongs to the SecB family. In terms of assembly, homotetramer, a dimer of dimers. One homotetramer interacts with 1 SecA dimer.

It localises to the cytoplasm. Its function is as follows. One of the proteins required for the normal export of preproteins out of the cell cytoplasm. It is a molecular chaperone that binds to a subset of precursor proteins, maintaining them in a translocation-competent state. It also specifically binds to its receptor SecA. This chain is Protein-export protein SecB, found in Rhodopseudomonas palustris (strain TIE-1).